Reading from the N-terminus, the 98-residue chain is Protein PROLINE CONTENT ALTERNATIVE 22 (98 aa).

Mainly expressed in flowers, to a lower extent, in roots and, at very low levels, in leaves and stems.

It localises to the cytoplasm. Functionally, acts as an opponent to RZF1 during early seedling growth in term of proline accumulation in response to dehydration and abscisic acid (ABA). Confers sensitivity to abiotic stresses such as ABA, drought and osmotic stress (e.g. mannitol treatment) by preventing proline accumulation and by reducing the expression of dehydration-inducible genes. Promotes the production of lipid peroxidation by drought stress thus leading to malondialdehyde (MDA) synthesis. Prevents pollen tube elongation. Necessary for RZF1 expression in seedlings. The protein is Protein PROLINE CONTENT ALTERNATIVE 22 of Arabidopsis thaliana (Mouse-ear cress).